The following is a 259-amino-acid chain: Phosphatidylserine decarboxylase proenzyme (259 aa).

Catalysis depends on charge relay system; for autoendoproteolytic cleavage activity residues Asp86, His142, and Ser226. Residue Ser226 is the Schiff-base intermediate with substrate; via pyruvic acid; for decarboxylase activity of the active site. Residue Ser226 is modified to Pyruvic acid (Ser); by autocatalysis.

It belongs to the phosphatidylserine decarboxylase family. PSD-B subfamily. Prokaryotic type I sub-subfamily. Heterodimer of a large membrane-associated beta subunit and a small pyruvoyl-containing alpha subunit. Pyruvate serves as cofactor. In terms of processing, is synthesized initially as an inactive proenzyme. Formation of the active enzyme involves a self-maturation process in which the active site pyruvoyl group is generated from an internal serine residue via an autocatalytic post-translational modification. Two non-identical subunits are generated from the proenzyme in this reaction, and the pyruvate is formed at the N-terminus of the alpha chain, which is derived from the carboxyl end of the proenzyme. The autoendoproteolytic cleavage occurs by a canonical serine protease mechanism, in which the side chain hydroxyl group of the serine supplies its oxygen atom to form the C-terminus of the beta chain, while the remainder of the serine residue undergoes an oxidative deamination to produce ammonia and the pyruvoyl prosthetic group on the alpha chain. During this reaction, the Ser that is part of the protease active site of the proenzyme becomes the pyruvoyl prosthetic group, which constitutes an essential element of the active site of the mature decarboxylase.

It is found in the cell membrane. The enzyme catalyses a 1,2-diacyl-sn-glycero-3-phospho-L-serine + H(+) = a 1,2-diacyl-sn-glycero-3-phosphoethanolamine + CO2. Its pathway is phospholipid metabolism; phosphatidylethanolamine biosynthesis; phosphatidylethanolamine from CDP-diacylglycerol: step 2/2. Catalyzes the formation of phosphatidylethanolamine (PtdEtn) from phosphatidylserine (PtdSer). The sequence is that of Phosphatidylserine decarboxylase proenzyme from Halalkalibacterium halodurans (strain ATCC BAA-125 / DSM 18197 / FERM 7344 / JCM 9153 / C-125) (Bacillus halodurans).